Here is a 543-residue protein sequence, read N- to C-terminus: Acrosin-binding protein (543 aa).

The first 25 residues, 1-25 (MGQPAAGSILTLLRVLLLPLGPALA), serve as a signal peptide directing secretion. The interval 26–106 (QDSPSAPTPG…ASWFESFCQF (81 aa)) is pro-ACR binding. Positions 26–276 (QDSPSAPTPG…DPHSFTARVR (251 aa)) are cleaved as a propeptide — removed in mature form. Residues 187–239 (AGQEQAAGHKQEQGQEQHKQDPTQEHKQDDGQEQEEQEEEQEEEGKQEEGQSV) form a disordered region. Residues 193–216 (AGHKQEQGQEQHKQDPTQEHKQDD) show a composition bias toward basic and acidic residues. A compositionally biased stretch (acidic residues) spans 217-232 (GQEQEEQEEEQEEEGK). Residues 319-427 (LPHKEALLVL…TQAGTSESGR (109 aa)) are pro-ACR binding.

As to quaternary structure, binds proacrosin (ACR). Does not bind the mature form of ACR. Post-translationally, the N-terminus is blocked. Phosphorylated on Tyr residues in capacitated sperm. In terms of processing, synthesized as a 60-kDa precursor, the 32-kDa mature form is post-translationally produced by the removal of the N-terminal half of the precursor during sperm maturation in the testis and/or epididymis. Specifically expressed in testis.

The protein resides in the secreted. It is found in the cytoplasmic vesicle. It localises to the secretory vesicle. Its subcellular location is the acrosome. In terms of biological role, acrosomal protein that maintains proacrosin (pro-ACR) as an enzymatically inactive zymogen in the acrosome. Involved also in the acrosome formation. This Cavia porcellus (Guinea pig) protein is Acrosin-binding protein (ACRBP).